The primary structure comprises 876 residues: Serrate RNA effector molecule homolog (876 aa).

Positions 1 to 90 are disordered; that stretch reads MGDSDDEYDR…RRDWDEHSSD (90 aa). N-acetylglycine is present on Gly2. Position 4 is a phosphoserine (Ser4). Tyr8 carries the phosphotyrosine modification. The segment covering 8–73 has biased composition (basic and acidic residues); the sequence is YDRRRRDKFR…ERFSPPRHEL (66 aa). A phosphoserine mark is found at Ser67, Ser74, and Ser136. Lys150 is covalently cross-linked (Glycyl lysine isopeptide (Lys-Gly) (interchain with G-Cter in SUMO2)). The segment at 271-412 is disordered; sequence EEEEEQAGKP…KPKDAAGLEC (142 aa). The span at 297-347 shows a compositional bias: basic and acidic residues; it reads DGERKTNDKDEKKEDGKQAENDSSNDDKTKKSEGDGDKEEKKEDSEKEAKK. The segment covering 370 to 387 has biased composition (acidic residues); the sequence is SESESESGQAEEEKEEAE. The segment covering 388-412 has biased composition (basic and acidic residues); sequence EALKEKEKPKEEEWEKPKDAAGLEC. Ser493 and Ser540 each carry phosphoserine. Residue Thr544 is modified to Phosphothreonine. Phosphoserine is present on Ser570. The disordered stretch occupies residues 575-598; the sequence is ELLGSSGGAPPEEPPKEGNPAEIN. A Phosphothreonine modification is found at Thr671. The residue at position 679 (Ser679) is a Phosphoserine. Omega-N-methylarginine is present on residues Arg833, Arg840, and Arg850. Residues 835–854 are disordered; that stretch reads NYDAFRGQGGYPGKPRNRMV.

The protein belongs to the ARS2 family. As to quaternary structure, interacts with NCBP1 and DROSHA. Interacts with CASP8AP2 and ERBB4. Interacts with LUZP4. Interacts with NCBP2/CBP20 and NCBP3. Interacts with MTREX. As to expression, ubiquitously expressed.

The protein resides in the nucleus. It is found in the nucleoplasm. It localises to the cytoplasm. Functionally, acts as a mediator between the cap-binding complex (CBC) and the primary microRNAs (miRNAs) processing machinery during cell proliferation. Contributes to the stability and delivery of capped primary miRNA transcripts to the primary miRNA processing complex containing DGCR8 and DROSHA, thereby playing a role in RNA-mediated gene silencing (RNAi) by miRNAs. Binds capped RNAs (m7GpppG-capped RNA); however interaction is probably mediated via its interaction with NCBP1/CBP80 component of the CBC complex. Involved in cell cycle progression at S phase. Does not directly confer arsenite resistance but rather modulates arsenic sensitivity. Independently of its activity on miRNAs, necessary and sufficient to promote neural stem cell self-renewal. Does so by directly binding SOX2 promoter and positively regulating its transcription. This Homo sapiens (Human) protein is Serrate RNA effector molecule homolog (SRRT).